We begin with the raw amino-acid sequence, 175 residues long: MWPLLKNNVVRTGRRYAVFQPRRFTPRPQHDAFGTKDDVRGFTVFSHAACGASLMDPLSPSRWEVALFPSSPPSLKDSCHLCAWTFGLAGPCAAWLSTRRELVGGFSKIIYIQNSAECWSVRETKRCCRICRWRSTSSSTDLRSNPYPIRWCYCWTMFPPMYPVLLLTASPVPTP.

This is an uncharacterized protein from Human cytomegalovirus (strain AD169) (HHV-5).